The following is a 75-amino-acid chain: Gas vesicle protein S (75 aa).

The protein belongs to the gas vesicle GvpA family.

It localises to the gas vesicle. Its function is as follows. Probably a minor component of the gas vesicle. Gas vesicles are hollow, gas filled proteinaceous nanostructures found in some microorganisms. It is not clear what function gas vesicles perform in soil bacteria. The chain is Gas vesicle protein S from Streptomyces sp. (strain CB03234).